The chain runs to 443 residues: Probable serine transporter (443 aa).

Topologically, residues 1–48 (MEIASNKGVIADASTPAGRAGMSESEWREAIKFDSTDTGWVIMSIGMA) are cytoplasmic. A helical transmembrane segment spans residues 49-69 (IGAGIVFLPVQVGLMGLWVFL). Over 70–110 (LSSVIGYPAMYLFQRLFINTLAESPECKDYPSVISGYLGKN) the chain is Periplasmic. Residues 111-131 (WGILLGALYFVMLVIWMFVYS) traverse the membrane as a helical segment. At 132–149 (TAITNDSASYLHTFGVTE) the chain is on the cytoplasmic side. The helical transmembrane segment at 150-170 (GLLSDSPFYGLVLICILVAIS) threads the bilayer. Residues 171-182 (SRGEKLLFKIST) lie on the Periplasmic side of the membrane. Residues 183-203 (GMVLTKLLVVAALGVSMVGMW) traverse the membrane as a helical segment. The Cytoplasmic segment spans residues 204–214 (HLYNVGSLPPL). Residues 215 to 235 (GLLVKNAIITLPFTLTSILFI) form a helical membrane-spanning segment. Over 236–264 (QTLSPMVISYRSREKSIEVARHKALRAMN) the chain is Periplasmic. The chain crosses the membrane as a helical span at residues 265-285 (IAFGILFVTVFFYAVSFTLAM). At 286-297 (GHDEAVKAYEQN) the chain is on the cytoplasmic side. The next 2 helical transmembrane spans lie at 298 to 318 (ISALAIAAQFISGDGAAWVKV) and 319 to 339 (VSVILNIFAVMTAFFGVYLGF). The Cytoplasmic portion of the chain corresponds to 340 to 367 (REATQGIVMNILRRKMPAEKINENLVQR). A helical membrane pass occupies residues 368–388 (GIMIFAILLAWSAIVLNAPVL). Ser-389 is a topological domain (periplasmic). The helical transmembrane segment at 390-410 (FTSICSPIFGMVGCLIPAWLV) threads the bilayer. Over 411–421 (YKVPALHKYKG) the chain is Cytoplasmic. Residues 422–442 (MSLYLIIVTGLLLCVSPFLAF) form a helical membrane-spanning segment. Ser-443 is a topological domain (periplasmic).

It belongs to the amino acid/polyamine transporter 2 family. SdaC/TdcC subfamily.

It localises to the cell inner membrane. Plays a role in L-cysteine detoxification. May transport both D- and L-serine. This is Probable serine transporter (dlsT) from Escherichia coli (strain K12).